Reading from the N-terminus, the 396-residue chain is Inhibitory POU protein (396 aa).

The POU-IV box signature appears at 86-95; it reads RAEALAAVDI. Residues 222-299 form the POU-specific domain; sequence DTDTDPRELE…ILQAWLEEAE (78 aa). Positions 302 to 328 are disordered; sequence AKNKRRDPDAPSVLPAGEKKRKRTSIA. Positions 320–377 form a DNA-binding region, homeobox; atypical; that stretch reads KKRKRTSIAAPEKRSLEAYFAVQPRPSGEKIAAIAEKLDLKKNVVRVWFCNQRQKQKR.

Belongs to the POU transcription factor family. Class-4 subfamily. Coexpressed with vvl in overlapping subsets of neurons in the embryonic central nervous system. Expressed in olfactory neurons.

The protein localises to the nucleus. Modulates gene transcription; simultaneously generates both a specific activator and an inhibitor of gene transcription, capable of modulating two distinct regulatory programs during neural development. Has a role in olfactory behavior. The sequence is that of Inhibitory POU protein (acj6) from Drosophila melanogaster (Fruit fly).